A 128-amino-acid chain; its full sequence is Small ribosomal subunit protein uS9c (128 aa).

Belongs to the universal ribosomal protein uS9 family.

The protein resides in the plastid. The sequence is that of Small ribosomal subunit protein uS9c (rps9) from Euglena longa (Euglenophycean alga).